The following is a 204-amino-acid chain: Holliday junction branch migration complex subunit RuvA (204 aa).

The domain I stretch occupies residues 1-64 (MIGKLKGTID…EDQLKLFGFM (64 aa)). Residues 65–143 (TALEREWFNL…AFAGEAINIA (79 aa)) form a domain II region. Residues 144–151 (LKQELGEG) form a flexible linker region. The tract at residues 152 to 204 (VAAAPVADAVSALTNLGYSRDQAANAVAAAMKTAGDDADSAKLIRLGLKELAR) is domain III.

Belongs to the RuvA family. In terms of assembly, homotetramer. Forms an RuvA(8)-RuvB(12)-Holliday junction (HJ) complex. HJ DNA is sandwiched between 2 RuvA tetramers; dsDNA enters through RuvA and exits via RuvB. An RuvB hexamer assembles on each DNA strand where it exits the tetramer. Each RuvB hexamer is contacted by two RuvA subunits (via domain III) on 2 adjacent RuvB subunits; this complex drives branch migration. In the full resolvosome a probable DNA-RuvA(4)-RuvB(12)-RuvC(2) complex forms which resolves the HJ.

The protein localises to the cytoplasm. Functionally, the RuvA-RuvB-RuvC complex processes Holliday junction (HJ) DNA during genetic recombination and DNA repair, while the RuvA-RuvB complex plays an important role in the rescue of blocked DNA replication forks via replication fork reversal (RFR). RuvA specifically binds to HJ cruciform DNA, conferring on it an open structure. The RuvB hexamer acts as an ATP-dependent pump, pulling dsDNA into and through the RuvAB complex. HJ branch migration allows RuvC to scan DNA until it finds its consensus sequence, where it cleaves and resolves the cruciform DNA. The chain is Holliday junction branch migration complex subunit RuvA from Rhizobium leguminosarum bv. trifolii (strain WSM2304).